The primary structure comprises 124 residues: 14 kDa phosphohistidine phosphatase (124 aa).

Position 20 (Lys20) interacts with substrate. The Proton acceptor role is filled by His52. Residue 93–95 coordinates substrate; sequence SMG.

It belongs to the janus family. Monomer.

The protein localises to the cytoplasm. It catalyses the reaction N(pros)-phospho-L-histidyl-[protein] + H2O = L-histidyl-[protein] + phosphate. It carries out the reaction N(tele)-phospho-L-histidyl-[protein] + H2O = L-histidyl-[protein] + phosphate. Exhibits phosphohistidine phosphatase activity. The polypeptide is 14 kDa phosphohistidine phosphatase (Phpt1) (Mus musculus (Mouse)).